Reading from the N-terminus, the 229-residue chain is Clathrin light chain (229 aa).

2 disordered regions span residues 1–24 and 76–132; these read MSQF…DSKN and EMQA…KLRE. A compositionally biased stretch (basic and acidic residues) spans 107-132; it reads EPVRKWKEDQMKRIQERDESSKKLRE. Position 229 is a phosphoserine (Ser-229).

This sequence belongs to the clathrin light chain family. Clathrin coats are formed from molecules containing 3 heavy chains and 3 light chains.

It is found in the cytoplasmic vesicle membrane. The protein localises to the membrane. It localises to the coated pit. Its function is as follows. Clathrin is the major protein of the polyhedral coat of coated pits and vesicles. The polypeptide is Clathrin light chain (clc1) (Schizosaccharomyces pombe (strain 972 / ATCC 24843) (Fission yeast)).